The chain runs to 173 residues: Small ribosomal subunit protein uS10m (173 aa).

The protein belongs to the universal ribosomal protein uS10 family. As to quaternary structure, component of the mitochondrial ribosome small subunit (28S) which comprises a 12S rRNA and about 30 distinct proteins.

It localises to the mitochondrion. In Drosophila melanogaster (Fruit fly), this protein is Small ribosomal subunit protein uS10m (mRpS10).